We begin with the raw amino-acid sequence, 250 residues long: 5-oxoprolinase subunit A (250 aa).

This sequence belongs to the LamB/PxpA family. As to quaternary structure, forms a complex composed of PxpA, PxpB and PxpC.

The enzyme catalyses 5-oxo-L-proline + ATP + 2 H2O = L-glutamate + ADP + phosphate + H(+). Catalyzes the cleavage of 5-oxoproline to form L-glutamate coupled to the hydrolysis of ATP to ADP and inorganic phosphate. The chain is 5-oxoprolinase subunit A from Chromohalobacter salexigens (strain ATCC BAA-138 / DSM 3043 / CIP 106854 / NCIMB 13768 / 1H11).